A 678-amino-acid chain; its full sequence is Amino-acid acetyltransferase, mitochondrial (678 aa).

Residues 86 to 111 (LKAQHPPKAQTEPTTGHSKGTVTQSL) form a disordered region. A compositionally biased stretch (polar residues) spans 96 to 111 (TEPTTGHSKGTVTQSL). The N-acetyltransferase domain maps to 499–668 (NRPRLSLDDP…YEQVCRSIQP (170 aa)).

The protein belongs to the acetyltransferase family.

Its subcellular location is the mitochondrion. It catalyses the reaction L-glutamate + acetyl-CoA = N-acetyl-L-glutamate + CoA + H(+). Its pathway is amino-acid biosynthesis; L-arginine biosynthesis; N(2)-acetyl-L-ornithine from L-glutamate: step 1/4. Functionally, N-acetylglutamate synthase involved in arginine biosynthesis. In Aspergillus oryzae (strain ATCC 42149 / RIB 40) (Yellow koji mold), this protein is Amino-acid acetyltransferase, mitochondrial (arg2).